Here is a 295-residue protein sequence, read N- to C-terminus: Gamma-glutamyl-L-1-hydroxyisopropylamide hydrolase (295 aa).

One can recognise a Glutamine amidotransferase type-1 domain in the interval 5 to 221 (RILICDGNTE…LRESARSLVE (217 aa)). C104 acts as the Nucleophile in catalysis. Catalysis depends on residues H200 and E202.

It carries out the reaction gamma-L-glutamyl-L-alaninol + H2O = L-alaninol + L-glutamate. Its function is as follows. Involved in the degradation of isopropylamine, which is a constituent of the herbicides atrazine. Catalyzes the hydrolysis of gamma-glutamyl-L-alaninol (GALO) to L-alaninol and L-glutamate. It can also uses gamma-glutamyl-isopropylamide, gamma-glutamyl-ethylamide, L-glutamine, and gamma-glutamyl-p-nitroanilide. The protein is Gamma-glutamyl-L-1-hydroxyisopropylamide hydrolase (ipuF) of Pseudomonas sp.